Consider the following 160-residue polypeptide: Transcription antitermination protein NusB (160 aa).

This sequence belongs to the NusB family.

In terms of biological role, involved in transcription antitermination. Required for transcription of ribosomal RNA (rRNA) genes. Binds specifically to the boxA antiterminator sequence of the ribosomal RNA (rrn) operons. The chain is Transcription antitermination protein NusB from Rhizobium johnstonii (strain DSM 114642 / LMG 32736 / 3841) (Rhizobium leguminosarum bv. viciae).